A 629-amino-acid polypeptide reads, in one-letter code: Chaperone protein HtpG (629 aa).

Residues 1-337 form an a; substrate-binding region; sequence MAASKETMQF…SSDLPLNVSR (337 aa). The interval 338-554 is b; it reads EILQGNRVID…ERDMALYMQQ (217 aa). The interval 555–629 is c; sequence LLKQAGHEIS…INQLMLALAG (75 aa).

The protein belongs to the heat shock protein 90 family. In terms of assembly, homodimer.

The protein resides in the cytoplasm. Molecular chaperone. Has ATPase activity. The chain is Chaperone protein HtpG from Acidithiobacillus ferrooxidans (strain ATCC 23270 / DSM 14882 / CIP 104768 / NCIMB 8455) (Ferrobacillus ferrooxidans (strain ATCC 23270)).